A 157-amino-acid chain; its full sequence is Ribosomal RNA large subunit methyltransferase H (157 aa).

Residues leucine 75, glycine 106, and 125–130 contribute to the S-adenosyl-L-methionine site; that span reads FSELTF.

This sequence belongs to the RNA methyltransferase RlmH family. As to quaternary structure, homodimer.

The protein resides in the cytoplasm. It carries out the reaction pseudouridine(1915) in 23S rRNA + S-adenosyl-L-methionine = N(3)-methylpseudouridine(1915) in 23S rRNA + S-adenosyl-L-homocysteine + H(+). Specifically methylates the pseudouridine at position 1915 (m3Psi1915) in 23S rRNA. This is Ribosomal RNA large subunit methyltransferase H from Malacoplasma penetrans (strain HF-2) (Mycoplasma penetrans).